Here is a 381-residue protein sequence, read N- to C-terminus: Dual-specificity RNA methyltransferase RlmN (381 aa).

The Proton acceptor role is filled by E95. Residues 101-347 (EDDRGTLCVS…TTVRKTRGDD (247 aa)) enclose the Radical SAM core domain. Residues C108 and C352 are joined by a disulfide bond. [4Fe-4S] cluster-binding residues include C115, C119, and C122. S-adenosyl-L-methionine is bound by residues 178 to 179 (GE), S210, 232 to 234 (SLH), and N309. C352 serves as the catalytic S-methylcysteine intermediate.

The protein belongs to the radical SAM superfamily. RlmN family. [4Fe-4S] cluster is required as a cofactor.

Its subcellular location is the cytoplasm. The enzyme catalyses adenosine(2503) in 23S rRNA + 2 reduced [2Fe-2S]-[ferredoxin] + 2 S-adenosyl-L-methionine = 2-methyladenosine(2503) in 23S rRNA + 5'-deoxyadenosine + L-methionine + 2 oxidized [2Fe-2S]-[ferredoxin] + S-adenosyl-L-homocysteine. It catalyses the reaction adenosine(37) in tRNA + 2 reduced [2Fe-2S]-[ferredoxin] + 2 S-adenosyl-L-methionine = 2-methyladenosine(37) in tRNA + 5'-deoxyadenosine + L-methionine + 2 oxidized [2Fe-2S]-[ferredoxin] + S-adenosyl-L-homocysteine. Specifically methylates position 2 of adenine 2503 in 23S rRNA and position 2 of adenine 37 in tRNAs. m2A2503 modification seems to play a crucial role in the proofreading step occurring at the peptidyl transferase center and thus would serve to optimize ribosomal fidelity. The polypeptide is Dual-specificity RNA methyltransferase RlmN (Bordetella petrii (strain ATCC BAA-461 / DSM 12804 / CCUG 43448)).